We begin with the raw amino-acid sequence, 137 residues long: Small ribosomal subunit protein bS6 (137 aa).

Positions 99-137 are disordered; it reads LSPMKAAESREDRRSGGDDRPRRSADSEERQSASQDEEE. Basic and acidic residues predominate over residues 105–129; the sequence is AESREDRRSGGDDRPRRSADSEERQ.

Belongs to the bacterial ribosomal protein bS6 family.

In terms of biological role, binds together with bS18 to 16S ribosomal RNA. The chain is Small ribosomal subunit protein bS6 from Marinobacter nauticus (strain ATCC 700491 / DSM 11845 / VT8) (Marinobacter aquaeolei).